The following is a 78-amino-acid chain: Large ribosomal subunit protein bL28 (78 aa).

The disordered stretch occupies residues 1 to 20 (MSRVCQVTGKRPAVGNNRSH).

The protein belongs to the bacterial ribosomal protein bL28 family.

The sequence is that of Large ribosomal subunit protein bL28 from Actinobacillus pleuropneumoniae serotype 7 (strain AP76).